The sequence spans 377 residues: 1-deoxy-D-xylulose 5-phosphate reductoisomerase (377 aa).

Residues threonine 20, glycine 21, isoleucine 23, asparagine 46, and asparagine 115 each contribute to the NADPH site. Lysine 116 lines the 1-deoxy-D-xylulose 5-phosphate pocket. Glutamate 117 provides a ligand contact to NADPH. A Mn(2+)-binding site is contributed by aspartate 141. 1-deoxy-D-xylulose 5-phosphate contacts are provided by serine 142, glutamate 143, serine 166, and histidine 189. Position 143 (glutamate 143) interacts with Mn(2+). Glycine 195 serves as a coordination point for NADPH. Serine 202, asparagine 207, lysine 208, and glutamate 211 together coordinate 1-deoxy-D-xylulose 5-phosphate. Glutamate 211 contributes to the Mn(2+) binding site.

The protein belongs to the DXR family. Mg(2+) serves as cofactor. It depends on Mn(2+) as a cofactor.

It catalyses the reaction 2-C-methyl-D-erythritol 4-phosphate + NADP(+) = 1-deoxy-D-xylulose 5-phosphate + NADPH + H(+). Its pathway is isoprenoid biosynthesis; isopentenyl diphosphate biosynthesis via DXP pathway; isopentenyl diphosphate from 1-deoxy-D-xylulose 5-phosphate: step 1/6. Its function is as follows. Catalyzes the NADPH-dependent rearrangement and reduction of 1-deoxy-D-xylulose-5-phosphate (DXP) to 2-C-methyl-D-erythritol 4-phosphate (MEP). The sequence is that of 1-deoxy-D-xylulose 5-phosphate reductoisomerase from Malacoplasma penetrans (strain HF-2) (Mycoplasma penetrans).